Reading from the N-terminus, the 300-residue chain is Telomere repeat-binding factor 1 (300 aa).

Residues 1–58 enclose the HTH myb-type domain; the sequence is MGAPKQKWTQEEESALKSGVIKHGPGKWRTILKDPEFSGVLYLRSNVDLKDKWRNMSV. Residues 28 to 57 constitute a DNA-binding region (H-T-H motif); that stretch reads WRTILKDPEFSGVLYLRSNVDLKDKWRNMS. Disordered stretches follow at residues 93 to 119 and 185 to 213; these read LQSD…RPNV and NSTP…PSPK. The H15 domain occupies 117 to 185; it reads PNVRLDSLIM…KVKRKYRIPN (69 aa). The stretch at 241–290 forms a coiled coil; sequence EAAAVAAQAVAEAEAAMAEAEEAAKEAEAAEAEAEAAQAFAEEASKTLKG.

It belongs to the histone H1/H5 family. SMH subfamily. As to quaternary structure, forms a homodimer and heterodimers with TRB2 or TRB3. Interacts with POT1b, TRB2 and TRB3 through its H15 domain.

It localises to the nucleus. It is found in the nucleolus. The protein localises to the chromosome. Functionally, binds preferentially double-stranded telomeric repeats. The sequence is that of Telomere repeat-binding factor 1 (TRB1) from Arabidopsis thaliana (Mouse-ear cress).